A 484-amino-acid chain; its full sequence is MAADNAGRWPGQPPGPPAPTHPASSVSLRWRVMLLAMSMVVISVVLMAVAVFAVTSRALYDDIDNQLRSRAQMLIESRSLDIDPGKAIEGTAYSDMNAMFYIPGRSKYTANQQGQTLPVGQPEQDVMDGTLLLSLRTVEHQRVLAIRLASGNTLLLSKSLAPTGKVLKRLGTVLLIVGGLGVAVAAIAGGMVASAGLRPVGRLTQAAERVARTDDLRPIPVIGNDELARLTETFNMMLRALAESRERQARLVTDAGHELRTPLTSLRTNVELLMESMKPGAPRIPEEDMAELRTDVIAQIEEMSTLVGDLVDLTRDDAGNAVHETVEITEVIDRSLERVRRRRNDIQFDVAVTPWQVYGDAAGLGRAVLNLLDNAAKWSPPGGRVGVGLTQIDALHAELVVSDRGPGIPPQERALVFERFFRSTSARSMPGSGLGLAIVKQVVLKHGGTLRIEDTVPGGTPPGTAMHVVLPGRPSPAGSDEAER.

The segment covering 1–10 has biased composition (low complexity); the sequence is MAADNAGRWP. The disordered stretch occupies residues 1–23; sequence MAADNAGRWPGQPPGPPAPTHPA. The Cytoplasmic portion of the chain corresponds to 1 to 31; sequence MAADNAGRWPGQPPGPPAPTHPASSVSLRWR. The span at 11 to 20 shows a compositional bias: pro residues; the sequence is GQPPGPPAPT. The chain crosses the membrane as a helical span at residues 32–52; the sequence is VMLLAMSMVVISVVLMAVAVF. Residues 53 to 172 lie on the Extracellular side of the membrane; it reads AVTSRALYDD…TGKVLKRLGT (120 aa). Residues 173–193 form a helical membrane-spanning segment; the sequence is VLLIVGGLGVAVAAIAGGMVA. Residues 194 to 246 form the HAMP domain; that stretch reads SAGLRPVGRLTQAAERVARTDDLRPIPVIGNDELARLTETFNMMLRALAESRE. The Cytoplasmic portion of the chain corresponds to 194 to 484; it reads SAGLRPVGRL…SPAGSDEAER (291 aa). One can recognise a Histidine kinase domain in the interval 254–474; sequence DAGHELRTPL…AMHVVLPGRP (221 aa). His-257 is subject to Phosphohistidine; by autocatalysis.

Requires Mg(2+) as cofactor. Mn(2+) serves as cofactor. In terms of processing, autophosphorylated.

The protein resides in the cell membrane. The enzyme catalyses ATP + protein L-histidine = ADP + protein N-phospho-L-histidine.. Member of the two-component regulatory system MprB/MprA which contributes to maintaining a balance among several systems involved in stress resistance and is required for establishment and maintenance of persistent infection in the host. In response to environmental signals MprB acts both as a membrane-associated protein kinase that undergoes autophosphorylation and subsequently transfers the phosphate to MprA, and a protein phosphatase that dephosphorylates phospho-MprA. The chain is Signal transduction histidine-protein kinase/phosphatase MprB (mprB) from Mycolicibacterium vanbaalenii (strain DSM 7251 / JCM 13017 / BCRC 16820 / KCTC 9966 / NRRL B-24157 / PYR-1) (Mycobacterium vanbaalenii).